The primary structure comprises 616 residues: Replication protein A 70 kDa DNA-binding subunit (616 aa).

The residue at position 1 (Met-1) is an N-acetylmethionine. Residues Lys-22 and Lys-88 each participate in a glycyl lysine isopeptide (Lys-Gly) (interchain with G-Cter in ubiquitin) cross-link. Positions 121 to 155 (GLGQPQVAPPAPAASPAASSRPQPQNGTSGAGSTV) are disordered. The span at 134-145 (ASPAASSRPQPQ) shows a compositional bias: low complexity. Residues 146–155 (NGTSGAGSTV) are compositionally biased toward polar residues. Lys-163 and Lys-167 each carry N6-acetyllysine; alternate. Glycyl lysine isopeptide (Lys-Gly) (interchain with G-Cter in ubiquitin); alternate cross-links involve residues Lys-163 and Lys-167. Residue Thr-180 is modified to Phosphothreonine. Residue Lys-183 forms a Glycyl lysine isopeptide (Lys-Gly) (interchain with G-Cter in ubiquitin) linkage. Thr-191 bears the Phosphothreonine mark. Residues 197-281 (WTICARVTNK…VKNDYEMTFN (85 aa)) constitute a DNA-binding region (OB). Residues Lys-220 and Lys-244 each participate in a glycyl lysine isopeptide (Lys-Gly) (interchain with G-Cter in ubiquitin) cross-link. N6-acetyllysine; alternate is present on Lys-259. Residue Lys-259 forms a Glycyl lysine isopeptide (Lys-Gly) (interchain with G-Cter in ubiquitin); alternate linkage. Glycyl lysine isopeptide (Lys-Gly) (interchain with G-Cter in ubiquitin) cross-links involve residues Lys-267 and Lys-331. Residue Ser-384 is modified to Phosphoserine. Residues Lys-410 and Lys-431 each participate in a glycyl lysine isopeptide (Lys-Gly) (interchain with G-Cter in ubiquitin) cross-link. Lys-449 is covalently cross-linked (Glycyl lysine isopeptide (Lys-Gly) (interchain with G-Cter in SUMO)). Lys-458 participates in a covalent cross-link: Glycyl lysine isopeptide (Lys-Gly) (interchain with G-Cter in ubiquitin). The C4-type zinc-finger motif lies at 481-503 (CPTQDCNKKVIDQQNGLYRCEKC). Residue Lys-553 forms a Glycyl lysine isopeptide (Lys-Gly) (interchain with G-Cter in ubiquitin) linkage. Lys-577 participates in a covalent cross-link: Glycyl lysine isopeptide (Lys-Gly) (interchain with G-Cter in SUMO).

Belongs to the replication factor A protein 1 family. Component of the canonical replication protein A complex (RPA), a heterotrimer composed of RPA1, RPA2 and RPA3. The DNA-binding activity may reside exclusively on the RPA1 subunit. Interacts with PRPF19; the PRP19-CDC5L complex is recruited to the sites of DNA repair where it ubiquitinates the replication protein A complex (RPA). Interacts with RIPK1. Interacts with the polymerase alpha subunit POLA1/p180; this interaction stabilizes the replicative complex and reduces the misincorporation rate of DNA polymerase alpha by acting as a fidelity clamp. Interacts with RAD51 and SENP6 to regulate DNA repair. Interacts with HELB; this interaction promotes HELB recruitment to chromatin following DNA damage. Interacts with PRIMPOL; leading to recruit PRIMPOL on chromatin and stimulate its DNA primase activity. Interacts with XPA; the interaction is direct and associates XPA with the RPA complex. Interacts with ETAA1; the interaction is direct and promotes ETAA1 recruitment at stalled replication forks. Interacts with RPA1; this interaction associates HROB with the RPA complex. Interacts (when poly-ADP-ribosylated) with HTATSF1. DNA damage-induced 'Lys-63'-linked polyubiquitination by PRPF19 mediates ATRIP recruitment to the RPA complex at sites of DNA damage and activation of ATR. Ubiquitinated by RFWD3 at stalled replication forks in response to DNA damage: ubiquitination by RFWD3 does not lead to degradation by the proteasome and promotes removal of the RPA complex from stalled replication forks, promoting homologous recombination. Post-translationally, sumoylated on lysine residues Lys-449 and Lys-577, with Lys-449 being the major site. Sumoylation promotes recruitment of RAD51 to the DNA damage foci to initiate DNA repair through homologous recombination. Desumoylated by SENP6. In terms of processing, poly-ADP-ribosylated by PARP1; promoting recruitment of HTATSF1.

Its subcellular location is the nucleus. It localises to the PML body. In terms of biological role, as part of the heterotrimeric replication protein A complex (RPA/RP-A), binds and stabilizes single-stranded DNA intermediates, that form during DNA replication or upon DNA stress. It prevents their reannealing and in parallel, recruits and activates different proteins and complexes involved in DNA metabolism. Thereby, it plays an essential role both in DNA replication and the cellular response to DNA damage. In the cellular response to DNA damage, the RPA complex controls DNA repair and DNA damage checkpoint activation. Through recruitment of ATRIP activates the ATR kinase a master regulator of the DNA damage response. It is required for the recruitment of the DNA double-strand break repair factors RAD51 and RAD52 to chromatin in response to DNA damage. Also recruits to sites of DNA damage proteins like XPA and XPG that are involved in nucleotide excision repair and is required for this mechanism of DNA repair. Also plays a role in base excision repair (BER) probably through interaction with UNG. Also recruits SMARCAL1/HARP, which is involved in replication fork restart, to sites of DNA damage. May also play a role in telomere maintenance. This is Replication protein A 70 kDa DNA-binding subunit (RPA1) from Pongo abelii (Sumatran orangutan).